The sequence spans 566 residues: Mannitol 2-dehydrogenase (566 aa).

106 to 117 (IVHVGVGGFHRA) is an NAD(+) binding site.

This sequence belongs to the mannitol dehydrogenase family. As to quaternary structure, monomer.

It catalyses the reaction D-mannitol + NAD(+) = D-fructose + NADH + H(+). Its function is as follows. Catalyzes the NAD(H)-dependent interconversion of D-fructose and D-mannitol in the mannitol metabolic pathway. This is Mannitol 2-dehydrogenase from Pyrenophora tritici-repentis (strain Pt-1C-BFP) (Wheat tan spot fungus).